Reading from the N-terminus, the 577-residue chain is 5'-AMP-activated protein kinase subunit gamma (577 aa).

Residues 45 to 226 (QSEGVGGGEL…NNNNSNSNNN (182 aa)) are disordered. Low complexity predominate over residues 58–88 (NNNTTNNNTPTNTTTTTNTNTTTMNNSNNNN). 2 stretches are compositionally biased toward polar residues: residues 106–121 (SIEQ…SQDG) and 138–155 (ESQS…NNNM). Low complexity predominate over residues 165-226 (STDNKSSTNT…NNNNSNSNNN (62 aa)). CBS domains follow at residues 279–341 (VIPI…KKPK), 364–426 (ERPS…QLPE), 438–499 (IGTF…LSPS), and 517–574 (QRPE…DVKS).

It belongs to the 5'-AMP-activated protein kinase gamma subunit family.

In terms of biological role, AMPK may be responsible for the regulation of fatty acid synthesis by phosphorylation of acetyl-CoA carboxylase. This Dictyostelium discoideum (Social amoeba) protein is 5'-AMP-activated protein kinase subunit gamma (prkag).